The primary structure comprises 702 residues: Cytolytic toxin-beta (702 aa).

Residues 2–264 (PSDILVVAAL…EAPQLMADSS (263 aa)) form a structural MACPF/CDC pore-forming domain region. 3 N-linked (GlcNAc...) asparagine glycosylation sites follow: Asn94, Asn101, and Asn286. Positions 265–387 (TPILRKVRNT…DIIEEAKHKV (123 aa)) are structural FAT domain. The tract at residues 388–515 (VLSKSQMARE…PRIPPVETIQ (128 aa)) is thioredoxin (THX) domain. The 199-residue stretch at 504–702 (SNPRIPPVET…ANGQIKLKGE (199 aa)) folds into the B30.2/SPRY domain.

This sequence belongs to the SNTX/VTX toxin family. In terms of assembly, heterodimer of alpha and beta subunits; non-covalently linked. Also associates into tetramers or even higher aggregates. Intrachain disulfide bonds may be present in the heterodimer. In terms of tissue distribution, expressed by the venom gland.

It is found in the secreted. This heterodimer induces potent hemolytic activities (when tested on rabbit erythrocytes, EC(50)=25-56 ng/mL) due to its ability to form pores in the cell membrane. The pore may be composed of 10 alpha/beta heterodimers. The toxin shows cardiovascular effects that include a vasorelaxant action that may involve the L-arginine-nitric oxid synthase pathway. In addition, it displays edema-inducing activities, increases vascular permeability. It also shows myotoxic activities and interferes irreversibly with neuromuscular function. It also induces irreversible platelet aggregation in rabbit or rat (but not in human or mouse) whole blood. In addition, it has been observed to increase spontaneous quantal acetylcholine release from isolated frog cutaneous pectoris motor endings. This Scorpaena plumieri (Spotted scorpionfish) protein is Cytolytic toxin-beta.